Here is a 378-residue protein sequence, read N- to C-terminus: METLCQRLDACQEKILDCFENDSKKIEDHIVYWKAVRHENVVLYKARQNNITKLRHQVVPCLQVCKAKACVAIEIQMALESLYKTEYKVEEWTLKDVCENMWHTAPKQCFKKSGKRIEVWFDGKKDNRTEYVVWQWVYYCGDNGWTKVPSVVDYKGIYYVHDGNKVYYTDFNDEAVKYGYKGTWEVHMGNESIYCPDSVSSTLRSNVSPVETVVEYNTYNTYQTPTTSTPVGANEAASSARPGKRPRTTEPDSTDTTRQSAARESHANRVNTNNTNNRQCLGGATCYNTEVDGGYKTTPVVHLKGEPNRLKCLRYRCQKHKHLFVNISSTYHWTNTHTEYSYITVVYKDETQRANFLNVVKIPPSIKIVMGHMTGVDM.

Residues 1 to 200 are transactivation domain; it reads METLCQRLDA…ESIYCPDSVS (200 aa). 2 stretches are compositionally biased toward low complexity: residues 221–230 and 268–278; these read TYQTPTTSTP and NRVNTNNTNNR. Positions 221 to 281 are disordered; the sequence is TYQTPTTSTP…TNNTNNRQCL (61 aa). The segment at 297–378 is DNA-binding domain; that stretch reads TTPVVHLKGE…VMGHMTGVDM (82 aa). K304 is covalently cross-linked (Glycyl lysine isopeptide (Lys-Gly) (interchain with G-Cter in SUMO)).

It belongs to the papillomaviridae E2 protein family. Binds DNA as homodimer. Interacts with protein E1; this interaction greatly increases E1 DNA-binding activity. Interacts with protein L1; this interaction enhances E2-dependent replication and transcription activation. Interacts with protein L2; this interaction inhibits E2 transcriptional activity but not DNA replication function E2. Interacts with protein E7; this interaction inhibits E7 oncogenic activity. Interacts with host TAF1; this interaction modulates E2-dependent transcriptional regulation. Interacts with host BRD4; this interaction mediates E2 transcriptional activation function. Additionally, the interaction with host BRD4 on mitotic chromosomes mediates tethering of the viral genome. Interacts with host TOPBP1; this interaction is required for optimal viral DNA replication. In terms of processing, phosphorylated. Post-translationally, sumoylation plays a regulatory role in E2 transcriptional activity.

The protein localises to the host nucleus. Its function is as follows. Plays a role in the initiation of viral DNA replication. A dimer of E2 interacts with a dimer of E1 in order to improve specificity of E1 DNA binding activity. Once the complex recognizes and binds DNA at specific sites, the E2 dimer is removed from DNA. E2 also regulates viral transcription through binding to the E2RE response element (5'-ACCNNNNNNGGT-3') present in multiple copies in the regulatory regions of the viral genome. Activates or represses transcription depending on E2RE's position with regards to proximal promoter elements including the TATA-box. Repression occurs by sterically hindering the assembly of the transcription initiation complex. The protein is Regulatory protein E2 of Homo sapiens (Human).